Here is a 126-residue protein sequence, read N- to C-terminus: Fluoride-specific ion channel FluC 2 (126 aa).

Helical transmembrane passes span threonine 5–leucine 25, glycine 44–leucine 64, alanine 68–leucine 88, and methionine 99–leucine 119. 2 residues coordinate Na(+): glycine 78 and threonine 81.

This sequence belongs to the fluoride channel Fluc/FEX (TC 1.A.43) family.

The protein resides in the cell membrane. It catalyses the reaction fluoride(in) = fluoride(out). Na(+) is not transported, but it plays an essential structural role and its presence is essential for fluoride channel function. In terms of biological role, fluoride-specific ion channel. Important for reducing fluoride concentration in the cell, thus reducing its toxicity. The polypeptide is Fluoride-specific ion channel FluC 2 (Mycobacterium bovis (strain ATCC BAA-935 / AF2122/97)).